The chain runs to 122 residues: Large ribosomal subunit protein uL14 (122 aa).

This sequence belongs to the universal ribosomal protein uL14 family. As to quaternary structure, part of the 50S ribosomal subunit. Forms a cluster with proteins L3 and L19. In the 70S ribosome, L14 and L19 interact and together make contacts with the 16S rRNA in bridges B5 and B8.

In terms of biological role, binds to 23S rRNA. Forms part of two intersubunit bridges in the 70S ribosome. In Methylobacterium sp. (strain 4-46), this protein is Large ribosomal subunit protein uL14.